The chain runs to 419 residues: tRNA(Ile)-lysidine synthase (419 aa).

25–30 (SGGIDS) provides a ligand contact to ATP.

The protein belongs to the tRNA(Ile)-lysidine synthase family.

It localises to the cytoplasm. It carries out the reaction cytidine(34) in tRNA(Ile2) + L-lysine + ATP = lysidine(34) in tRNA(Ile2) + AMP + diphosphate + H(+). Functionally, ligates lysine onto the cytidine present at position 34 of the AUA codon-specific tRNA(Ile) that contains the anticodon CAU, in an ATP-dependent manner. Cytidine is converted to lysidine, thus changing the amino acid specificity of the tRNA from methionine to isoleucine. The sequence is that of tRNA(Ile)-lysidine synthase from Actinobacillus pleuropneumoniae serotype 7 (strain AP76).